We begin with the raw amino-acid sequence, 152 residues long: UPF0266 membrane protein YobD (152 aa).

The Periplasmic segment spans residues M1 to D5. Residues L6 to M26 traverse the membrane as a helical segment. The Cytoplasmic portion of the chain corresponds to P27–R44. Residues I45–H65 form a helical membrane-spanning segment. Position 66 (G66) is a topological domain, periplasmic. The helical transmembrane segment at A67–I87 threads the bilayer. The Cytoplasmic segment spans residues R88–Q152.

The protein belongs to the UPF0266 family.

The protein localises to the cell inner membrane. This is UPF0266 membrane protein YobD (yobD) from Salmonella typhi.